Reading from the N-terminus, the 140-residue chain is Large ribosomal subunit protein uL16c (140 aa).

This sequence belongs to the universal ribosomal protein uL16 family. Part of the 50S ribosomal subunit.

The protein localises to the plastid. It localises to the chloroplast. This is Large ribosomal subunit protein uL16c from Psilotum nudum (Whisk fern).